The sequence spans 160 residues: Ribosomal RNA large subunit methyltransferase H (160 aa).

Residues Leu76, Gly108, and 127-132 (FGFMTW) each bind S-adenosyl-L-methionine.

Belongs to the RNA methyltransferase RlmH family. In terms of assembly, homodimer.

The protein localises to the cytoplasm. It catalyses the reaction pseudouridine(1915) in 23S rRNA + S-adenosyl-L-methionine = N(3)-methylpseudouridine(1915) in 23S rRNA + S-adenosyl-L-homocysteine + H(+). Its function is as follows. Specifically methylates the pseudouridine at position 1915 (m3Psi1915) in 23S rRNA. In Bartonella tribocorum (strain CIP 105476 / IBS 506), this protein is Ribosomal RNA large subunit methyltransferase H.